A 363-amino-acid chain; its full sequence is Probable dual-specificity RNA methyltransferase RlmN (363 aa).

E106 serves as the catalytic Proton acceptor. Positions 112–345 (HEYGNSVCVT…VTIRREQGHD (234 aa)) constitute a Radical SAM core domain. C119 and C350 are joined by a disulfide. 3 residues coordinate [4Fe-4S] cluster: C126, C130, and C133. Residues 176–177 (GE), S208, 231–233 (SLH), and N307 contribute to the S-adenosyl-L-methionine site. Catalysis depends on C350, which acts as the S-methylcysteine intermediate.

Belongs to the radical SAM superfamily. RlmN family. Requires [4Fe-4S] cluster as cofactor.

The protein resides in the cytoplasm. It carries out the reaction adenosine(2503) in 23S rRNA + 2 reduced [2Fe-2S]-[ferredoxin] + 2 S-adenosyl-L-methionine = 2-methyladenosine(2503) in 23S rRNA + 5'-deoxyadenosine + L-methionine + 2 oxidized [2Fe-2S]-[ferredoxin] + S-adenosyl-L-homocysteine. It catalyses the reaction adenosine(37) in tRNA + 2 reduced [2Fe-2S]-[ferredoxin] + 2 S-adenosyl-L-methionine = 2-methyladenosine(37) in tRNA + 5'-deoxyadenosine + L-methionine + 2 oxidized [2Fe-2S]-[ferredoxin] + S-adenosyl-L-homocysteine. Functionally, specifically methylates position 2 of adenine 2503 in 23S rRNA and position 2 of adenine 37 in tRNAs. This Bacillus subtilis (strain 168) protein is Probable dual-specificity RNA methyltransferase RlmN.